The primary structure comprises 515 residues: Maturase K (515 aa).

The protein belongs to the intron maturase 2 family. MatK subfamily.

It is found in the plastid. The protein localises to the chloroplast. Usually encoded in the trnK tRNA gene intron. Probably assists in splicing its own and other chloroplast group II introns. This is Maturase K from Pinus cembra (Swiss stone pine).